The sequence spans 103 residues: Large ribosomal subunit protein bL21 (103 aa).

The protein belongs to the bacterial ribosomal protein bL21 family. In terms of assembly, part of the 50S ribosomal subunit. Contacts protein L20.

This protein binds to 23S rRNA in the presence of protein L20. This is Large ribosomal subunit protein bL21 from Acidithiobacillus ferrooxidans (strain ATCC 23270 / DSM 14882 / CIP 104768 / NCIMB 8455) (Ferrobacillus ferrooxidans (strain ATCC 23270)).